The chain runs to 356 residues: uncharacterized protein (356 aa).

The chain crosses the membrane as a helical span at residues 8–28; it reads ILGFVLFVLGAAIFLTEVMHS.

The protein to C.elegans C41C4.1 and C18B2.1.

It is found in the membrane. This is an uncharacterized protein from Caenorhabditis elegans.